Consider the following 205-residue polypeptide: Arginine exporter protein ArgO (205 aa).

The next 6 membrane-spanning stretches (helical) occupy residues 1 to 21, 37 to 57, 68 to 88, 112 to 132, 147 to 167, and 182 to 202; these read MLAV…PLGP, LMVA…GIFG, LLAL…WGAF, VVTM…TFVV, WFAL…ALLA, and IINT…AWQG.

The protein belongs to the LysE/ArgO transporter (TC 2.A.75) family.

The protein resides in the cell inner membrane. The enzyme catalyses L-arginine(in) = L-arginine(out). Involved in the export of arginine. Important to control the intracellular level of arginine and the correct balance between arginine and lysine. The protein is Arginine exporter protein ArgO of Serratia proteamaculans (strain 568).